The primary structure comprises 456 residues: Methylenetetrahydrofolate--tRNA-(uracil-5-)-methyltransferase TrmFO (456 aa).

11 to 16 contributes to the FAD binding site; the sequence is GAGLAG.

This sequence belongs to the MnmG family. TrmFO subfamily. FAD is required as a cofactor.

Its subcellular location is the cytoplasm. It catalyses the reaction uridine(54) in tRNA + (6R)-5,10-methylene-5,6,7,8-tetrahydrofolate + NADH + H(+) = 5-methyluridine(54) in tRNA + (6S)-5,6,7,8-tetrahydrofolate + NAD(+). The catalysed reaction is uridine(54) in tRNA + (6R)-5,10-methylene-5,6,7,8-tetrahydrofolate + NADPH + H(+) = 5-methyluridine(54) in tRNA + (6S)-5,6,7,8-tetrahydrofolate + NADP(+). Catalyzes the folate-dependent formation of 5-methyl-uridine at position 54 (M-5-U54) in all tRNAs. This Synechococcus sp. (strain CC9605) protein is Methylenetetrahydrofolate--tRNA-(uracil-5-)-methyltransferase TrmFO.